The sequence spans 375 residues: N-acetylneuraminate epimerase (375 aa).

The first 22 residues, 1–22 (MKLTKTALCTALFATFTFSANA), serve as a signal peptide directing secretion. Kelch repeat units follow at residues 43-87 (TVYV…AAVD), 89-140 (KLYV…ASHG), 142-176 (KVYILGGSNLSIFNGFFQDNVAAGEDQAKKDEIAA), 177-222 (AYFD…TIQG), 225-273 (LVVV…LAGA), 295-344 (KQYK…SYNN), and 346-375 (VLLIGGETDGGKALTSVKAISYDGKKLTIE). Catalysis depends on E231, which acts as the Proton acceptor.

Belongs to the NanM family. Homodimer.

The protein localises to the periplasm. The enzyme catalyses N-acetyl-alpha-neuraminate = N-acetyl-beta-neuraminate. Its function is as follows. Converts alpha-N-acetylneuranimic acid (Neu5Ac) to the beta-anomer, accelerating the equilibrium between the alpha- and beta-anomers. Probably facilitates sialidase-negative bacteria to compete successfully for limited amounts of extracellular Neu5Ac, which is likely taken up in the beta-anomer. In addition, the rapid removal of sialic acid from solution might be advantageous to the bacterium to damp down host responses. The sequence is that of N-acetylneuraminate epimerase from Haemophilus influenzae (strain PittEE).